The chain runs to 223 residues: Urease accessory protein UreF (223 aa).

The protein belongs to the UreF family. In terms of assembly, ureD, UreF and UreG form a complex that acts as a GTP-hydrolysis-dependent molecular chaperone, activating the urease apoprotein by helping to assemble the nickel containing metallocenter of UreC. The UreE protein probably delivers the nickel.

The protein localises to the cytoplasm. In terms of biological role, required for maturation of urease via the functional incorporation of the urease nickel metallocenter. The chain is Urease accessory protein UreF from Mesorhizobium japonicum (strain LMG 29417 / CECT 9101 / MAFF 303099) (Mesorhizobium loti (strain MAFF 303099)).